The primary structure comprises 314 residues: MGAGDKTAAGMPRIGMGTAVQGPKPDPIRRAVLRAIEVGYRHFDTAAHYETEAPIGEAAAEAVRSGAVASRDDLFITSKLWCSDAHRDRVVPALRQTLRNLQMEYVDLYLVHWPVSMKPGRFKAPFTAEDFVPFDMRAVWEAMEECHRLGLAKAIGVANFSCKKLETLLSFATIPPTVNQVEVNPVWQQRKLREFCRGKGIQLCAYSPLGAKGTHWGSDAVMDAGVLQEIAASRGKSVAQVCLRWVYEQGDCLIVKSFDEARMRENLDVDGWELTEEEHRRIAEIPQRKINLGKRYVSEHGPYKSLEELWDGEI.

The interval methionine 1–glutamine 21 is disordered. Residue aspartate 44 coordinates NADP(+). The Proton donor role is filled by tyrosine 49. Histidine 112 is a substrate binding site. NADP(+) is bound by residues alanine 158–asparagine 159, glutamine 180, phenylalanine 258–asparagine 266, and glutamate 273–arginine 281.

This sequence belongs to the aldo/keto reductase family. Mostly expressed in root tissues, observed in mesocotyl and embryonic roots, seedling roots, crown and seedling leafes, mature bracts, anthers, pistil, caryopsis and embryos.

It catalyses the reaction 2'-deoxymugineate + NAD(+) = 3''-deamino-3''-oxonicotianamine + NADH + H(+). It carries out the reaction 2'-deoxymugineate + NADP(+) = 3''-deamino-3''-oxonicotianamine + NADPH + H(+). Its pathway is siderophore biosynthesis. Functionally, catalyzes the reduction of a 3''-keto intermediate during the biosynthesis of 2'-deoxymugineic acid (DMA) from L-Met. Involved in the formation of phytosiderophores (MAs) belonging to the mugineic acid family and required to acquire iron. This chain is Deoxymugineic acid synthase 1-A, found in Triticum aestivum (Wheat).